An 83-amino-acid chain; its full sequence is Beta-toxin Ct7 (83 aa).

The first 18 residues, 1–18 (MKVLILIIASVLLIGVEC), serve as a signal peptide directing secretion. Positions 19–81 (KDGYPMNSEG…VWDSATNKCG (63 aa)) constitute an LCN-type CS-alpha/beta domain. Cystine bridges form between Cys-29/Cys-80, Cys-33/Cys-54, Cys-40/Cys-61, and Cys-44/Cys-63. Gly-81 carries the post-translational modification Glycine amide. Residue Gly-82 is a propeptide.

This sequence belongs to the long (4 C-C) scorpion toxin superfamily. Sodium channel inhibitor family. Beta subfamily. As to expression, expressed by the venom gland.

It localises to the secreted. Beta toxins bind voltage-independently at site-4 of sodium channels (Nav) and shift the voltage of activation toward more negative potentials thereby affecting sodium channel activation and promoting spontaneous and repetitive firing. Is possibly toxic to mice, freshwater shrimp and crickets. The polypeptide is Beta-toxin Ct7 (Centruroides tecomanus (Scorpion)).